We begin with the raw amino-acid sequence, 63 residues long: Beta-glucosidase A-3 (63 aa).

Aspartate 12 is a catalytic residue. N-linked (GlcNAc...) asparagine glycans are attached at residues asparagine 48 and asparagine 56.

It belongs to the glycosyl hydrolase 3 family.

The catalysed reaction is Hydrolysis of terminal, non-reducing beta-D-glucosyl residues with release of beta-D-glucose.. Its pathway is glycan metabolism; cellulose degradation. The polypeptide is Beta-glucosidase A-3 (Aspergillus wentii).